The following is a 357-amino-acid chain: DNA replication and repair protein RecF (357 aa).

Position 30 to 37 (30 to 37 (GANGSGKT)) interacts with ATP.

This sequence belongs to the RecF family.

The protein resides in the cytoplasm. The RecF protein is involved in DNA metabolism; it is required for DNA replication and normal SOS inducibility. RecF binds preferentially to single-stranded, linear DNA. It also seems to bind ATP. The protein is DNA replication and repair protein RecF of Escherichia coli O6:K15:H31 (strain 536 / UPEC).